A 188-amino-acid polypeptide reads, in one-letter code: Elongation factor P (188 aa).

This sequence belongs to the elongation factor P family.

Its subcellular location is the cytoplasm. It functions in the pathway protein biosynthesis; polypeptide chain elongation. In terms of biological role, involved in peptide bond synthesis. Stimulates efficient translation and peptide-bond synthesis on native or reconstituted 70S ribosomes in vitro. Probably functions indirectly by altering the affinity of the ribosome for aminoacyl-tRNA, thus increasing their reactivity as acceptors for peptidyl transferase. This chain is Elongation factor P, found in Cereibacter sphaeroides (strain KD131 / KCTC 12085) (Rhodobacter sphaeroides).